The following is a 427-amino-acid chain: UDP-N-acetyl-D-mannosamine dehydrogenase (427 aa).

Positions 20, 21, 40, 45, 92, and 130 each coordinate NAD(+). UDP-N-acetyl-alpha-D-mannosaminouronate contacts are provided by Arg-157, Val-158, Lys-209, Asn-213, Arg-216, His-247, Arg-249, and Gly-260. Lys-209 (proton donor/acceptor) is an active-site residue. The active-site Nucleophile is Cys-263. UDP-N-acetyl-alpha-D-mannosaminouronate-binding residues include Tyr-317 and Lys-318. Arg-325 contacts NAD(+). Lys-403 is a binding site for UDP-N-acetyl-alpha-D-mannosaminouronate.

The protein belongs to the UDP-glucose/GDP-mannose dehydrogenase family. Homotetramer; probably dimer of dimers.

The enzyme catalyses UDP-N-acetyl-alpha-D-mannosamine + 2 NAD(+) + H2O = UDP-N-acetyl-alpha-D-mannosaminouronate + 2 NADH + 3 H(+). In terms of biological role, catalyzes the four-electron oxidation of UDP-N-acetyl-D-mannosamine (UDP-ManNAc), reducing NAD(+) and releasing UDP-N-acetylmannosaminuronic acid (UDP-ManNAcA). The polypeptide is UDP-N-acetyl-D-mannosamine dehydrogenase (wecC) (Methanocaldococcus jannaschii (strain ATCC 43067 / DSM 2661 / JAL-1 / JCM 10045 / NBRC 100440) (Methanococcus jannaschii)).